A 203-amino-acid chain; its full sequence is Ribosomal RNA large subunit methyltransferase E (203 aa).

S-adenosyl-L-methionine contacts are provided by G51, W53, D69, D85, and D108. K148 serves as the catalytic Proton acceptor.

The protein belongs to the class I-like SAM-binding methyltransferase superfamily. RNA methyltransferase RlmE family.

It localises to the cytoplasm. The enzyme catalyses uridine(2552) in 23S rRNA + S-adenosyl-L-methionine = 2'-O-methyluridine(2552) in 23S rRNA + S-adenosyl-L-homocysteine + H(+). Its function is as follows. Specifically methylates the uridine in position 2552 of 23S rRNA at the 2'-O position of the ribose in the fully assembled 50S ribosomal subunit. In Methanocorpusculum labreanum (strain ATCC 43576 / DSM 4855 / Z), this protein is Ribosomal RNA large subunit methyltransferase E.